The chain runs to 488 residues: MESVSKESYLPSFHQFPLCASLSEFESASSKETQSSALKNISPHPYDILQAPNSRALISALKTLQNKICRLESEKTHARDRLTNLSRAAGEHKKVLESEKRSAEWAAQEATSQKNDVAMQLNNAEQRCSLLEKQLDYMRKMMENADIQNNPIHQIPAQKEQKDMLEMQSKLQKLEVLENECLRLKATHKSSENKIQFLEEKLSVEEQERKALQDKAAQVQTSLEVNRILLSSASSQNSTQRKVKKKKQSKQKNAISKEPSSKEPLSKEPPSKCFFPKAGELPFVAGKSTTSSHSLSANVQNMLHMMKHQSPRVSQKDPKTVEHKPSILPGGSRSIPTRLMSSSTGDTLSDILLALQDELGQMSFEHQELLKHIDETKNTDMREDLERELDYLVKQMEIKSDQIIKLKRHQLNVAKLKKTAKKQPRPPSTTKPAEDEQNIGATDPCTPRNKGNLANGTGTPNSKASLELLKSVRKIQMTLKKDDIMWEK.

Positions 71-226 (LESEKTHARD…AQVQTSLEVN (156 aa)) form a coiled coil. 2 disordered regions span residues 232–272 (SASS…PPSK) and 311–342 (PRVS…LMSS). Residues 241-250 (RKVKKKKQSK) are compositionally biased toward basic residues. Basic and acidic residues-rich tracts occupy residues 259-270 (PSSKEPLSKEPP) and 314-325 (SQKDPKTVEHKP). Residues 377–403 (KNTDMREDLERELDYLVKQMEIKSDQI) are a coiled coil. The interval 416 to 464 (LKKTAKKQPRPPSTTKPAEDEQNIGATDPCTPRNKGNLANGTGTPNSKA) is disordered. Over residues 452–464 (NLANGTGTPNSKA) the composition is skewed to polar residues.

Belongs to the translokin family. As to quaternary structure, interacts with clip1, mis12, ndc80 and zwint. Interacts with gamma-tubulin.

Its subcellular location is the cytoplasm. It localises to the cytoskeleton. The protein localises to the microtubule organizing center. It is found in the centrosome. The protein resides in the chromosome. Its subcellular location is the centromere. It localises to the kinetochore. The protein localises to the spindle. Functionally, required for spindle microtubule attachment to both kinetochores and centrosomes. Also functions to tether minus-ends of spindle microtubules to centrosomes. May act by forming ring-like structures around microtubules, or by serving as a cross-linker or scaffold at the attachment site. The sequence is that of Centrosomal protein cep57l1 (cep57l1) from Xenopus laevis (African clawed frog).